Here is a 545-residue protein sequence, read N- to C-terminus: MLTQLKTYPKLLKHYEEIKEAHMRDWFSKDKERASRYFVQLESLSLDYSKNRLNDTTLKLLFELANDCSLKEKIEAMFKGEKINTTEKRAVLHTALRSLNDTEILLDNMEVLKSVRSVLKRMRAFSDSVRSGKRLGYTNQVITDIVNIGIGGSDLGALMVCTALKRYGHPRLKMHFVSNVDGTQILDVLEKINPASTLFIVASKTFSTQETLTNALTARKWFVERSGDEKHIAKHFVAVSTNKEAVQQFGIDEHNMFEFWDFVGGRYSLWSAIGLSIMIYLGKKNFNALLKGAYLMDEHFRNAPFESNLPVLMGLIGVWYINFFQSKSHLIAPYDQYLRHFPKFIQQLDMESNGKRISKKGETIPYDTCPVVWGDMGINAQHAFFQLLHQGTHLIPIDFIASLDKKPNAKGHHEILFSNVLAQAQAFMKGKSYEEALGELLFKGLDKDEAKDLAHHRVFFGNRPSNILLLEKISPSNIGALVALYEHKVFVQGVIWDINSFDQWGVELGKELAVPILQELEGHKSNAYFDSSTKHLIELYKNYNQ.

The active-site Proton donor is Glu-351. Active-site residues include His-382 and Lys-510.

It belongs to the GPI family.

Its subcellular location is the cytoplasm. The enzyme catalyses alpha-D-glucose 6-phosphate = beta-D-fructose 6-phosphate. Its pathway is carbohydrate biosynthesis; gluconeogenesis. The protein operates within carbohydrate degradation; glycolysis; D-glyceraldehyde 3-phosphate and glycerone phosphate from D-glucose: step 2/4. Functionally, catalyzes the reversible isomerization of glucose-6-phosphate to fructose-6-phosphate. This Helicobacter pylori (strain P12) protein is Glucose-6-phosphate isomerase.